The primary structure comprises 315 residues: Olfactory receptor 4E1 (315 aa).

Topologically, residues 1 to 33 are extracellular; the sequence is MEEAILLNQTSLVTYFRLRGLSVNHKARIAMFS. An N-linked (GlcNAc...) asparagine glycan is attached at Asn8. A helical transmembrane segment spans residues 34–54; the sequence is MFLIFYVLTLIGNVLIVITII. Over 55 to 61 the chain is Cytoplasmic; the sequence is YDHRLHT. Residues 62-82 form a helical membrane-spanning segment; sequence PMYFFLSNLSFIDVCHSTVTV. The Extracellular portion of the chain corresponds to 83-101; it reads PKMLRDVWSEEKLISFDAC. Cys101 and Cys183 are disulfide-bonded. A helical membrane pass occupies residues 102 to 122; sequence VTQMFFLHLFACTEIFLLTVM. The Cytoplasmic portion of the chain corresponds to 123–143; the sequence is AYDRYVAICKPLQYMIVMNWK. A helical membrane pass occupies residues 144-164; the sequence is VCVLLAVALWTGGTIHSIALT. At 165-208 the chain is on the extracellular side; it reads SLTIKLPYCGPDEIDNFFCDVPQVIKLACIDTHVIEILIVSNSG. The helical transmembrane segment at 209–229 threads the bilayer; that stretch reads LISVVCFVVLVVSYAVILVSL. Over 230 to 240 the chain is Cytoplasmic; it reads RQQISKGKRKA. A helical transmembrane segment spans residues 241–261; that stretch reads LSTCAAHLTVVTLFLGHCIFI. Over 262–272 the chain is Extracellular; sequence YSRPSTSLPED. Residues 273-293 traverse the membrane as a helical segment; it reads KVVSVFFTAVTPLLNPIIYTL. Residues 294–315 are Cytoplasmic-facing; it reads RNEEMKSALNKLVGRKERKEEK.

It belongs to the G-protein coupled receptor 1 family.

The protein resides in the cell membrane. Its function is as follows. Odorant receptor. In Homo sapiens (Human), this protein is Olfactory receptor 4E1 (OR4E1).